We begin with the raw amino-acid sequence, 65 residues long: DNA-directed RNA polymerase subunit Rpo10 (65 aa).

Cys7, Cys10, Cys44, and Cys45 together coordinate Zn(2+).

Belongs to the archaeal Rpo10/eukaryotic RPB10 RNA polymerase subunit family. Part of the RNA polymerase complex. The cofactor is Zn(2+).

It is found in the cytoplasm. It catalyses the reaction RNA(n) + a ribonucleoside 5'-triphosphate = RNA(n+1) + diphosphate. DNA-dependent RNA polymerase (RNAP) catalyzes the transcription of DNA into RNA using the four ribonucleoside triphosphates as substrates. The protein is DNA-directed RNA polymerase subunit Rpo10 of Pyrobaculum arsenaticum (strain DSM 13514 / JCM 11321 / PZ6).